The primary structure comprises 327 residues: tRNA-modifying protein YgfZ (327 aa).

Tryptophan 27 and tryptophan 189 together coordinate folate.

It belongs to the tRNA-modifying YgfZ family.

It localises to the cytoplasm. Folate-binding protein involved in regulating the level of ATP-DnaA and in the modification of some tRNAs. It is probably a key factor in regulatory networks that act via tRNA modification, such as initiation of chromosomal replication. This chain is tRNA-modifying protein YgfZ, found in Klebsiella pneumoniae (strain 342).